Reading from the N-terminus, the 47-residue chain is Potassium channel toxin TcoKIK (47 aa).

The BetaSPN-type CS-alpha/beta domain maps to 14-47; sequence EYACPAIDKFCEDHCAAKKAVGKCDDFKCNCIKL. 3 disulfide bridges follow: C17–C37, C24–C42, and C28–C44.

The protein belongs to the long chain scorpion toxin family. Class 2 subfamily. In terms of tissue distribution, expressed by the venom gland.

It is found in the secreted. It localises to the target cell membrane. In terms of biological role, blocks voltage-gated potassium channels. Its application (10 uM) to cells recombinantly expressing channels results in membrane damage and cell lysis. This is Potassium channel toxin TcoKIK from Tityus costatus (Brazilian scorpion).